Reading from the N-terminus, the 119-residue chain is Beta-2-microglobulin (119 aa).

The N-terminal stretch at 1–20 (MFRSVALAVLALLFLSGLEA) is a signal peptide. Residues 25 to 114 (PKIQVYSRHP…VTLSGPRTVK (90 aa)) enclose the Ig-like C1-type domain. Residues C45 and C100 are joined by a disulfide bond.

Belongs to the beta-2-microglobulin family. Heterodimer of an alpha chain and a beta chain. Beta-2-microglobulin is the beta-chain of major histocompatibility complex class I molecules.

The protein resides in the secreted. Its function is as follows. Component of the class I major histocompatibility complex (MHC). Involved in the presentation of peptide antigens to the immune system. The polypeptide is Beta-2-microglobulin (B2M) (Chlorocebus aethiops (Green monkey)).